The following is an 815-amino-acid chain: Dual specificity tyrosine-phosphorylation-regulated kinase mbk-2 (815 aa).

Disordered stretches follow at residues 1–49, 67–146, 185–204, and 298–395; these read MAAL…NYTR, PSSF…PLGT, YEFPSGQAQQQRRLGGSQQH, and ALPS…FRPE. Polar residues-rich tracts occupy residues 7–25 and 40–49; these read FTRNSRSYGQQPIDVTQQG and SKMSNINYTR. The span at 68–78 shows a compositional bias: low complexity; sequence SSFSGASSSSS. Composition is skewed to polar residues over residues 119–140 and 190–204; these read SGNTLTRSYHQPSSTNSSTSNL and GQAQQQRRLGGSQQH. Low complexity predominate over residues 301–316; the sequence is SVGTSSSNGSSNSSSG. Residues 325-351 are compositionally biased toward polar residues; sequence LMTQSIGGPNKHLSASHSTLNTASTHD. Serine 361 bears the Phosphoserine; by cdk-1 mark. Residues 363 to 391 show a composition bias toward low complexity; the sequence is SNESLSRSHTSSSGGSQGGHNSNSGSNSG. Positions 460-773 constitute a Protein kinase domain; the sequence is YEVLKVIGKG…PAQALKHKWL (314 aa). ATP-binding positions include 466-474 and lysine 489; that span reads IGKGSFGQV. Aspartate 586 (proton acceptor) is an active-site residue. Phosphotyrosine; by autocatalysis is present on tyrosine 620.

This sequence belongs to the protein kinase superfamily. CMGC Ser/Thr protein kinase family. MNB/DYRK subfamily. In terms of assembly, part of a complex, consisting of pseudophosphatases egg-3, egg-4, egg-5 and kinase mbk-2. Interacts (via Tyr-618 and Tyr-620) with egg-4 (via tyrosine-protein phosphatase domain) and egg-5 (via tyrosine-protein phosphatase domain); mbk-2 tyrosine phosphorylation enhances the interaction. The interaction inhibits mbk-2 kinase activity and is required for mbk-2 oocyte cortex localization. Interacts (via N-terminus) with egg-3 (via tyrosine-protein phosphatase domain); the interaction does not affect mbk-2 kinase activity, is enhanced by mbk-2 tyrosine phosphorylation status and requires prior binding of mbk-2 to egg-4 and egg-5. Requires Mg(2+) as cofactor. In terms of processing, autophosphorylated.

It localises to the cytoplasm. Its subcellular location is the cell cortex. The catalysed reaction is L-seryl-[protein] + ATP = O-phospho-L-seryl-[protein] + ADP + H(+). It catalyses the reaction L-threonyl-[protein] + ATP = O-phospho-L-threonyl-[protein] + ADP + H(+). The enzyme catalyses L-tyrosyl-[protein] + ATP = O-phospho-L-tyrosyl-[protein] + ADP + H(+). With respect to regulation, activated during oocyte maturation by phosphorylation on Ser-361 by cdk-1. The pseudotyrosine phosphatases egg-4 and egg-5 sequester activated mbk-2 until the meiotic divisions and inhibit mbk-2 kinase activity directly, using a mixed-inhibition mechanism that does not involve tyrosine dephosphorylation. In terms of biological role, required for oocyte-to-zygote transition in which it phosphorylates oocyte proteins, including mei-1, oma-1, oma-2, mex-5, and mex-6, modifying their activity and/or stability following meiosis. Through phosphorylation of P granule components including meg-1, promotes the disassembly of zygotic P granules in the anterior cytoplasm during zygote polarization, and thus plays a role in P granule distribution and segregation in early stage embryos following meiosis. Functions in both spindle positioning and in the posterior localization of cytoplasmic determinants, including pie-1, pos-1, and pgl-1, in early embryos. Involved in the asymmetric distribution of plk-1 at the 2-cell embryonic stage. The sequence is that of Dual specificity tyrosine-phosphorylation-regulated kinase mbk-2 from Caenorhabditis briggsae.